The chain runs to 349 residues: Ferredoxin--NADP reductase 1 (349 aa).

FAD is bound by residues glutamate 36, lysine 44, tyrosine 48, valine 88, leucine 123, aspartate 290, and serine 331.

The protein belongs to the ferredoxin--NADP reductase type 2 family. Homodimer. The cofactor is FAD.

The catalysed reaction is 2 reduced [2Fe-2S]-[ferredoxin] + NADP(+) + H(+) = 2 oxidized [2Fe-2S]-[ferredoxin] + NADPH. This is Ferredoxin--NADP reductase 1 from Bacillus cytotoxicus (strain DSM 22905 / CIP 110041 / 391-98 / NVH 391-98).